A 63-amino-acid polypeptide reads, in one-letter code: Large ribosomal subunit protein uL29 (63 aa).

The protein belongs to the universal ribosomal protein uL29 family.

The chain is Large ribosomal subunit protein uL29 from Alcanivorax borkumensis (strain ATCC 700651 / DSM 11573 / NCIMB 13689 / SK2).